The chain runs to 150 residues: Large ribosomal subunit protein bL9 (150 aa).

The protein belongs to the bacterial ribosomal protein bL9 family.

In terms of biological role, binds to the 23S rRNA. In Methylibium petroleiphilum (strain ATCC BAA-1232 / LMG 22953 / PM1), this protein is Large ribosomal subunit protein bL9.